Consider the following 279-residue polypeptide: Energy-coupling factor transporter ATP-binding protein EcfA1 (279 aa).

Residues 6 to 240 (VRLEHVFYKY…ADAMRAIGLG (235 aa)) form the ABC transporter domain. 40 to 47 (GHNGSGKS) lines the ATP pocket.

Belongs to the ABC transporter superfamily. Energy-coupling factor EcfA family. In terms of assembly, forms a stable energy-coupling factor (ECF) transporter complex composed of 2 membrane-embedded substrate-binding proteins (S component), 2 ATP-binding proteins (A component) and 2 transmembrane proteins (T component).

The protein resides in the cell membrane. Functionally, ATP-binding (A) component of a common energy-coupling factor (ECF) ABC-transporter complex. Unlike classic ABC transporters this ECF transporter provides the energy necessary to transport a number of different substrates. This chain is Energy-coupling factor transporter ATP-binding protein EcfA1, found in Listeria innocua serovar 6a (strain ATCC BAA-680 / CLIP 11262).